Here is a 430-residue protein sequence, read N- to C-terminus: Uric acid permease PucK (430 aa).

The next 14 membrane-spanning stretches (helical) occupy residues 18–38, 43–63, 67–87, 97–117, 122–142, 163–183, 185–205, 209–229, 233–253, 274–294, 310–330, 333–353, 369–389, and 398–418; these read MLAM…AIGL, LTYL…LQLW, YFGI…GPMI, AIYG…GFFG, FFPP…LIPT, LLGF…KGFI, SIAI…MGKV, EVLE…PPTF, AVVT…GVYF, AEGL…TAFS, VIAI…AAAL, VIPT…VISY, LLII…PALF, and VLAG…HAFF.

The protein belongs to the nucleobase:cation symporter-2 (NCS2) (TC 2.A.40) family.

Its subcellular location is the cell membrane. Functionally, uptake of uric acid. In Bacillus subtilis (strain 168), this protein is Uric acid permease PucK (pucK).